The following is a 172-amino-acid chain: 3-hydroxydecanoyl-[acyl-carrier-protein] dehydratase (172 aa).

His-71 is an active-site residue.

The protein belongs to the thioester dehydratase family. FabA subfamily. Homodimer.

It localises to the cytoplasm. The enzyme catalyses a (3R)-hydroxyacyl-[ACP] = a (2E)-enoyl-[ACP] + H2O. It carries out the reaction (3R)-hydroxydecanoyl-[ACP] = (2E)-decenoyl-[ACP] + H2O. The catalysed reaction is (2E)-decenoyl-[ACP] = (3Z)-decenoyl-[ACP]. Its pathway is lipid metabolism; fatty acid biosynthesis. Its function is as follows. Necessary for the introduction of cis unsaturation into fatty acids. Catalyzes the dehydration of (3R)-3-hydroxydecanoyl-ACP to E-(2)-decenoyl-ACP and then its isomerization to Z-(3)-decenoyl-ACP. Can catalyze the dehydratase reaction for beta-hydroxyacyl-ACPs with saturated chain lengths up to 16:0, being most active on intermediate chain length. This Vibrio vulnificus (strain CMCP6) protein is 3-hydroxydecanoyl-[acyl-carrier-protein] dehydratase.